We begin with the raw amino-acid sequence, 597 residues long: Formate--tetrahydrofolate ligase (597 aa).

84–91 (TPLGEGKS) is an ATP binding site.

Belongs to the formate--tetrahydrofolate ligase family.

It catalyses the reaction (6S)-5,6,7,8-tetrahydrofolate + formate + ATP = (6R)-10-formyltetrahydrofolate + ADP + phosphate. Its pathway is one-carbon metabolism; tetrahydrofolate interconversion. The chain is Formate--tetrahydrofolate ligase from Dehalococcoides mccartyi (strain ATCC BAA-2266 / KCTC 15142 / 195) (Dehalococcoides ethenogenes (strain 195)).